Here is a 44-residue protein sequence, read N- to C-terminus: Metallothionein-4 (44 aa).

It belongs to the metallothionein superfamily. Type 5 family.

Functionally, this protein binds cations of several transition elements. Thought to be involved in metal ion homeostasis. The chain is Metallothionein-4 (MtnD) from Drosophila melanogaster (Fruit fly).